The sequence spans 328 residues: Ferredoxin--NADP reductase (328 aa).

6 residues coordinate FAD: Ser14, Glu33, Gln41, Tyr46, Ile90, and Phe126.

This sequence belongs to the ferredoxin--NADP reductase type 2 family. In terms of assembly, homodimer. It depends on FAD as a cofactor.

The catalysed reaction is 2 reduced [2Fe-2S]-[ferredoxin] + NADP(+) + H(+) = 2 oxidized [2Fe-2S]-[ferredoxin] + NADPH. This chain is Ferredoxin--NADP reductase, found in Mycoplasmoides gallisepticum (strain R(low / passage 15 / clone 2)) (Mycoplasma gallisepticum).